Here is a 242-residue protein sequence, read N- to C-terminus: Capsid protein (242 aa).

Residues 1-42 (MPYKRKLTSYFPQSKRFRGAKSGMAVVKTSASRRLYKKGKRK) carry the Bipartite nuclear localization signal motif.

It belongs to the geminiviridae capsid protein family. Homomultimer. Binds to single-stranded and double-stranded viral DNA. Interacts (via nuclear localization signal) with host importin alpha-1a.

It is found in the virion. Its subcellular location is the host nucleus. Its function is as follows. Encapsidates the viral genome into characteristic twinned ('geminate') particles. Binds the genomic viral ssDNA and shuttles it into and out of the cell nucleus. Plays a role in protection of the genome from degradation, virus acquisition and transmission by insect vectors, infectivity, and systemic movement. The CP of monopartite geminiviruses is absolutely essential for virus movement. This is Capsid protein from Solanum lycopersicum (Tomato).